The sequence spans 227 residues: Cytochrome c oxidase subunit 2 (227 aa).

The Mitochondrial intermembrane segment spans residues 1–14; that stretch reads MAYPFQLGLQDATS. A helical membrane pass occupies residues 15–45; sequence PIMEELTNFHDHTLMIVFLISSLVLYLISLM. Topologically, residues 46-59 are mitochondrial matrix; it reads LSTKLIHTSTMDAQ. Residues 60-87 form a helical membrane-spanning segment; the sequence is EVETIWTILPAIILIMIALPSLRILYMM. The Mitochondrial intermembrane segment spans residues 88–227; the sequence is DEINNPALTV…LFENWSISMS (140 aa). The Cu cation site is built by histidine 161, cysteine 196, glutamate 198, cysteine 200, histidine 204, and methionine 207. Position 198 (glutamate 198) interacts with Mg(2+).

Belongs to the cytochrome c oxidase subunit 2 family. As to quaternary structure, component of the cytochrome c oxidase (complex IV, CIV), a multisubunit enzyme composed of 14 subunits. The complex is composed of a catalytic core of 3 subunits MT-CO1, MT-CO2 and MT-CO3, encoded in the mitochondrial DNA, and 11 supernumerary subunits COX4I, COX5A, COX5B, COX6A, COX6B, COX6C, COX7A, COX7B, COX7C, COX8 and NDUFA4, which are encoded in the nuclear genome. The complex exists as a monomer or a dimer and forms supercomplexes (SCs) in the inner mitochondrial membrane with NADH-ubiquinone oxidoreductase (complex I, CI) and ubiquinol-cytochrome c oxidoreductase (cytochrome b-c1 complex, complex III, CIII), resulting in different assemblies (supercomplex SCI(1)III(2)IV(1) and megacomplex MCI(2)III(2)IV(2)). Found in a complex with TMEM177, COA6, COX18, COX20, SCO1 and SCO2. Interacts with TMEM177 in a COX20-dependent manner. Interacts with COX20. Interacts with COX16. Cu cation is required as a cofactor.

Its subcellular location is the mitochondrion inner membrane. The enzyme catalyses 4 Fe(II)-[cytochrome c] + O2 + 8 H(+)(in) = 4 Fe(III)-[cytochrome c] + 2 H2O + 4 H(+)(out). Its function is as follows. Component of the cytochrome c oxidase, the last enzyme in the mitochondrial electron transport chain which drives oxidative phosphorylation. The respiratory chain contains 3 multisubunit complexes succinate dehydrogenase (complex II, CII), ubiquinol-cytochrome c oxidoreductase (cytochrome b-c1 complex, complex III, CIII) and cytochrome c oxidase (complex IV, CIV), that cooperate to transfer electrons derived from NADH and succinate to molecular oxygen, creating an electrochemical gradient over the inner membrane that drives transmembrane transport and the ATP synthase. Cytochrome c oxidase is the component of the respiratory chain that catalyzes the reduction of oxygen to water. Electrons originating from reduced cytochrome c in the intermembrane space (IMS) are transferred via the dinuclear copper A center (CU(A)) of subunit 2 and heme A of subunit 1 to the active site in subunit 1, a binuclear center (BNC) formed by heme A3 and copper B (CU(B)). The BNC reduces molecular oxygen to 2 water molecules using 4 electrons from cytochrome c in the IMS and 4 protons from the mitochondrial matrix. This is Cytochrome c oxidase subunit 2 (MT-CO2) from Gerbilliscus robustus (Fringe-tailed gerbil).